We begin with the raw amino-acid sequence, 601 residues long: Secretogranin-2 (601 aa).

The signal sequence occupies residues 1 to 30 (MSSQRNYCLAGCLSSCILVILMSFSDAASF). A disordered region spans residues 89–109 (EQKDTQALSTDTAKSPTSDDE). Residues 93–104 (TQALSTDTAKSP) are compositionally biased toward polar residues. Y151 bears the Sulfotyrosine mark. Basic and acidic residues predominate over residues 258-273 (VESQTQEELKESKEEV). A disordered region spans residues 258–307 (VESQTQEELKESKEEVEKTDDMEDEIKRSGLLGLQDEEPEKDTKEQESEN).

This sequence belongs to the chromogranin/secretogranin protein family.

The protein localises to the secreted. Functionally, neuroendocrine protein of the granin family that regulates the biogenesis of secretory granules. The polypeptide is Secretogranin-2 (Pelophylax ridibundus (Marsh frog)).